An 85-amino-acid polypeptide reads, in one-letter code: Large ribosomal subunit protein bL27 (85 aa).

Residues 1 to 22 (MAHKKAGGSTRNGRDSESKRLG) form a disordered region.

This sequence belongs to the bacterial ribosomal protein bL27 family.

This Aliivibrio salmonicida (strain LFI1238) (Vibrio salmonicida (strain LFI1238)) protein is Large ribosomal subunit protein bL27.